The chain runs to 466 residues: UDP-N-acetylmuramoylalanine--D-glutamate ligase (466 aa).

122 to 128 provides a ligand contact to ATP; it reads GTNGKTT.

Belongs to the MurCDEF family.

It is found in the cytoplasm. It catalyses the reaction UDP-N-acetyl-alpha-D-muramoyl-L-alanine + D-glutamate + ATP = UDP-N-acetyl-alpha-D-muramoyl-L-alanyl-D-glutamate + ADP + phosphate + H(+). It participates in cell wall biogenesis; peptidoglycan biosynthesis. Functionally, cell wall formation. Catalyzes the addition of glutamate to the nucleotide precursor UDP-N-acetylmuramoyl-L-alanine (UMA). This chain is UDP-N-acetylmuramoylalanine--D-glutamate ligase, found in Aromatoleum aromaticum (strain DSM 19018 / LMG 30748 / EbN1) (Azoarcus sp. (strain EbN1)).